The following is a 249-amino-acid chain: MPHWLILDAGNSRLKFGLWDGHRVHATGAVSWSGDWPGELDMALAAMARPERVVVGSVHQTATVEALEAISRRRWGCPLTRITTTAAACGVQNGYRDYRQLGVDRWAAVVAAHLRAPEAWHLVIDVGTAATVDVVGPRGDYRGGAIFPGLRLLADALGSGTAGLPSLAGEAVPLPARSTPDAIRGGVVHGLAGALRHLASEMLPAEAVRPRRWLTGGDAGRLQPLLPQGAVWAPDLVLEGLAQLARESG.

8-15 provides a ligand contact to ATP; sequence DAGNSRLK. Substrate contacts are provided by residues Tyr-95 and 102 to 105; that span reads GVDR. Asp-104 serves as the catalytic Proton acceptor. Asp-125 contributes to the K(+) binding site. Thr-128 contributes to the ATP binding site. Thr-179 provides a ligand contact to substrate.

Belongs to the type III pantothenate kinase family. Homodimer. Requires NH4(+) as cofactor. K(+) is required as a cofactor.

It is found in the cytoplasm. It catalyses the reaction (R)-pantothenate + ATP = (R)-4'-phosphopantothenate + ADP + H(+). The protein operates within cofactor biosynthesis; coenzyme A biosynthesis; CoA from (R)-pantothenate: step 1/5. Functionally, catalyzes the phosphorylation of pantothenate (Pan), the first step in CoA biosynthesis. In Alkalilimnicola ehrlichii (strain ATCC BAA-1101 / DSM 17681 / MLHE-1), this protein is Type III pantothenate kinase.